A 129-amino-acid polypeptide reads, in one-letter code: Large ribosomal subunit protein uL22 (129 aa).

It belongs to the universal ribosomal protein uL22 family. As to quaternary structure, part of the 50S ribosomal subunit.

Its function is as follows. This protein binds specifically to 23S rRNA; its binding is stimulated by other ribosomal proteins, e.g. L4, L17, and L20. It is important during the early stages of 50S assembly. It makes multiple contacts with different domains of the 23S rRNA in the assembled 50S subunit and ribosome. In terms of biological role, the globular domain of the protein is located near the polypeptide exit tunnel on the outside of the subunit, while an extended beta-hairpin is found that lines the wall of the exit tunnel in the center of the 70S ribosome. The protein is Large ribosomal subunit protein uL22 of Brucella abortus (strain 2308).